A 528-amino-acid chain; its full sequence is Peptide chain release factor 3 (528 aa).

In terms of domain architecture, tr-type G spans 10–278 (DRRRTFGIIS…AFVEQAPVPR (269 aa)). GTP is bound by residues 19–26 (SHPDAGKT), 87–91 (DTPGH), and 141–144 (NKLD).

The protein belongs to the TRAFAC class translation factor GTPase superfamily. Classic translation factor GTPase family. PrfC subfamily.

Its subcellular location is the cytoplasm. Increases the formation of ribosomal termination complexes and stimulates activities of RF-1 and RF-2. It binds guanine nucleotides and has strong preference for UGA stop codons. It may interact directly with the ribosome. The stimulation of RF-1 and RF-2 is significantly reduced by GTP and GDP, but not by GMP. In Syntrophotalea carbinolica (strain DSM 2380 / NBRC 103641 / GraBd1) (Pelobacter carbinolicus), this protein is Peptide chain release factor 3.